Consider the following 321-residue polypeptide: Ribose-phosphate pyrophosphokinase 1 (321 aa).

Mg(2+) is bound by residues D131, H133, D142, and D146.

It belongs to the ribose-phosphate pyrophosphokinase family.

It catalyses the reaction D-ribose 5-phosphate + ATP = 5-phospho-alpha-D-ribose 1-diphosphate + AMP + H(+). The chain is Ribose-phosphate pyrophosphokinase 1 (PRS1) from Candida albicans (Yeast).